The following is a 143-amino-acid chain: Small ribosomal subunit protein uS11c (143 aa).

The protein belongs to the universal ribosomal protein uS11 family. In terms of assembly, part of the 30S ribosomal subunit.

The protein localises to the plastid. The protein resides in the chloroplast. The chain is Small ribosomal subunit protein uS11c from Oryza nivara (Indian wild rice).